Consider the following 713-residue polypeptide: RNA-binding protein vts1 (713 aa).

Residues 154-188 show a composition bias toward low complexity; the sequence is NSGLSLDKSLPSSPKGDSPSLSSSLPSLTTKSNLS. Disordered stretches follow at residues 154 to 208, 254 to 336, 356 to 389, 554 to 596, and 667 to 713; these read NSGL…SSKH, EPPA…RDRG, DESSRSRWSNISYSPPPPPPPPELLNHSPKSRPL, EKIE…GNEL, and KAAK…SSMD. Composition is skewed to polar residues over residues 189–208 and 258–281; these read GNLNMVTPASTQGPAFSSKH and SSASTSPRNTPTPSNNGTSINANV. 2 stretches are compositionally biased toward low complexity: residues 282–297 and 304–320; these read TSSLTSNSTGKTSKTT and SKKSLPSNSTPSKPNTS. Polar residues predominate over residues 321-330; the sequence is FFETPHNNIW. The segment covering 369–378 has biased composition (pro residues); that stretch reads SPPPPPPPPE. Over residues 559-569 the composition is skewed to polar residues; sequence PPNNSKNQTYR. The span at 570–583 shows a compositional bias: basic residues; it reads RSSRGSNKTRKSIS. An SAM domain is found at 595–656; it reads ELPQDIPSWL…LKSFQEVAPL (62 aa). Polar residues predominate over residues 670–681; the sequence is KNQSSESLTSFK. At Ser673 the chain carries Phosphoserine. Low complexity predominate over residues 691–702; it reads SGSMSNEISSNS. Positions 703 to 713 are enriched in polar residues; sequence TKQDVSSSSMD.

The protein belongs to the VTS1 family. Monomer. Binds to RNA.

Its subcellular location is the cytoplasm. It localises to the cytosol. It is found in the P-body. Its function is as follows. RNA-binding protein involved in post-transcriptional regulation through transcript degradation. This chain is RNA-binding protein vts1, found in Schizosaccharomyces pombe (strain 972 / ATCC 24843) (Fission yeast).